Reading from the N-terminus, the 1523-residue chain is Slit homolog 3 protein (1523 aa).

The first 33 residues, 1–33 (MALGRTGAGAAVRARLALGLALASILSGPPAAA), serve as a signal peptide directing secretion. Residues 34-61 (CPTKCTCSAASVDCHGLGLRAVPRGIPR) enclose the LRRNT domain. LRR repeat units follow at residues 62–83 (NAER…DFAG), 86–107 (NLRV…AFQD), 110–131 (QLER…LFQS), 134–155 (KLTR…AFRG), 158–179 (GVKN…AFRA), and 182–203 (DLEI…SFNH). Asparagine 72 carries an N-linked (GlcNAc...) asparagine glycan. N-linked (GlcNAc...) asparagine glycosylation is present at asparagine 192. In terms of domain architecture, LRRCT 1 spans 215 to 265 (NHLYCDCHLAWLSDWLRQRRTIGQFTLCMAPVHLRGFSVADVQKKEYVCPG). One can recognise an LRRNT 2 domain in the interval 271-307 (PACNANSLSCPSACSCSNNIVDCRGKGLTEIPANLPE). An intrachain disulfide couples cysteine 284 to cysteine 293. LRR repeat units follow at residues 308–329 (GIVE…AFTQ), 332–353 (KLKR…AFQG), 356–377 (SLTS…LFDG), 380–401 (SLQL…TFQD), and 404–425 (NLNL…LFVP). Positions 437 to 487 (NPFVCDCHLKWLADYLQDNPIETSGARCSSPRRLANKRISQIKSKKFRCSG) constitute an LRRCT 2 domain. 4 disulfide bridges follow: cysteine 441–cysteine 464, cysteine 443–cysteine 485, cysteine 505–cysteine 511, and cysteine 509–cysteine 518. Positions 496 to 532 (SSECFMDLVCPEKCRCEGTIVDCSNQKLARIPSHLPE) constitute an LRRNT 3 domain. LRR repeat units follow at residues 533–554 (YTTD…GIFK), 558–579 (NLRK…AFDG), 582–603 (GVQE…MFRG), 606–627 (SLKT…TFAG), and 630–651 (SVRL…AFTT). Residue asparagine 563 is glycosylated (N-linked (GlcNAc...) asparagine). The N-linked (GlcNAc...) asparagine glycan is linked to asparagine 622. Residues 663–713 (NPFNCNCHMAWLGRWLRKRRIVSGNPRCQKPFFLKEIPIQDVAIQDFTCDG) enclose the LRRCT 3 domain. 2 cysteine pairs are disulfide-bonded: cysteine 667–cysteine 690 and cysteine 669–cysteine 711. The 37-residue stretch at 716–752 (ESSCQLSPRCPEQCTCVETVVRCSNRGLHALPKGMPK) folds into the LRRNT 4 domain. LRR repeat units follow at residues 753 to 774 (DVTE…LSAF), 776 to 797 (QLTL…TFSN), 800 to 821 (HLST…AFNG), and 824 to 845 (SLRV…SFND). Asparagine 784, asparagine 792, and asparagine 797 each carry an N-linked (GlcNAc...) asparagine glycan. The 51-residue stretch at 857–907 (NPLHCDCSLRWLSEWVKAGYKEPGIARCSSPESMADRLLLTTPTHRFQCKG) folds into the LRRCT 4 domain. EGF-like domains lie at 918–953 (NACL…KDCT), 955–994 (PINT…QRCE), 996–1032 (NPDD…ELCD), 1034–1072 (VIDY…KLCE), 1074–1110 (NNDD…LFCE), and 1119–1155 (QTSP…PRCE). 18 disulfide bridges follow: cysteine 920–cysteine 931, cysteine 925–cysteine 941, cysteine 943–cysteine 952, cysteine 959–cysteine 970, cysteine 964–cysteine 982, cysteine 984–cysteine 993, cysteine 1000–cysteine 1011, cysteine 1005–cysteine 1020, cysteine 1022–cysteine 1031, cysteine 1038–cysteine 1051, cysteine 1045–cysteine 1060, cysteine 1062–cysteine 1071, cysteine 1078–cysteine 1089, cysteine 1083–cysteine 1098, cysteine 1100–cysteine 1109, cysteine 1123–cysteine 1134, cysteine 1128–cysteine 1143, and cysteine 1145–cysteine 1154. An N-linked (GlcNAc...) asparagine glycan is attached at asparagine 928. Asparagine 1025 is a glycosylation site (N-linked (GlcNAc...) asparagine). A Laminin G-like domain is found at 1158–1332 (ITVNFVGKDS…PQSLGVSPGC (175 aa)). N-linked (GlcNAc...) asparagine glycans are attached at residues asparagine 1181 and asparagine 1247. 5 disulfides stabilise this stretch: cysteine 1305/cysteine 1332, cysteine 1355/cysteine 1364, cysteine 1372/cysteine 1382, cysteine 1377/cysteine 1391, and cysteine 1393/cysteine 1402. 2 consecutive EGF-like domains span residues 1340–1365 (HGLC…PLCD) and 1368–1403 (ARDP…ALCD). N-linked (GlcNAc...) asparagine glycosylation is present at asparagine 1406. The 37-residue stretch at 1408–1444 (SASACSAFKCHHGQCHISDRGEPYCLCQPGFSGHHCE) folds into the EGF-like 9 domain. Cystine bridges form between cysteine 1412-cysteine 1422, cysteine 1417-cysteine 1432, cysteine 1434-cysteine 1443, cysteine 1449-cysteine 1487, cysteine 1467-cysteine 1501, cysteine 1478-cysteine 1517, and cysteine 1482-cysteine 1519. The 75-residue stretch at 1449 to 1523 (CMGEIVREAI…HLECGCRACS (75 aa)) folds into the CTCK domain.

It is found in the secreted. Functionally, may act as molecular guidance cue in cellular migration, and function may be mediated by interaction with roundabout homolog receptors. The sequence is that of Slit homolog 3 protein (Slit3) from Mus musculus (Mouse).